The following is a 320-amino-acid chain: ATP-dependent 6-phosphofructokinase (320 aa).

Gly-11 is a binding site for ATP. 21–25 (RAVTK) provides a ligand contact to ADP. ATP contacts are provided by residues 72-73 (RF) and 102-105 (GDGS). Asp-103 is a binding site for Mg(2+). 125–127 (TID) lines the substrate pocket. The active-site Proton acceptor is the Asp-127. ADP is bound at residue Arg-154. Substrate contacts are provided by residues Arg-162 and 169–171 (MGR). Residues 185 to 187 (GAD) and 213 to 215 (KDH) contribute to the ADP site. Residues Glu-222, Arg-243, and 249 to 252 (HMQR) contribute to the substrate site.

Belongs to the phosphofructokinase type A (PFKA) family. ATP-dependent PFK group I subfamily. Prokaryotic clade 'B1' sub-subfamily. As to quaternary structure, homotetramer. Requires Mg(2+) as cofactor.

The protein localises to the cytoplasm. The catalysed reaction is beta-D-fructose 6-phosphate + ATP = beta-D-fructose 1,6-bisphosphate + ADP + H(+). It participates in carbohydrate degradation; glycolysis; D-glyceraldehyde 3-phosphate and glycerone phosphate from D-glucose: step 3/4. With respect to regulation, allosterically activated by ADP and other diphosphonucleosides, and allosterically inhibited by phosphoenolpyruvate. In terms of biological role, catalyzes the phosphorylation of D-fructose 6-phosphate to fructose 1,6-bisphosphate by ATP, the first committing step of glycolysis. The sequence is that of ATP-dependent 6-phosphofructokinase from Lactobacillus acidophilus (strain ATCC 700396 / NCK56 / N2 / NCFM).